The primary structure comprises 256 residues: Deoxyribose-phosphate aldolase (256 aa).

Catalysis depends on D102, which acts as the Proton donor/acceptor. K165 acts as the Schiff-base intermediate with acetaldehyde in catalysis. K197 acts as the Proton donor/acceptor in catalysis.

This sequence belongs to the DeoC/FbaB aldolase family. DeoC type 2 subfamily.

The protein localises to the cytoplasm. It catalyses the reaction 2-deoxy-D-ribose 5-phosphate = D-glyceraldehyde 3-phosphate + acetaldehyde. Its pathway is carbohydrate degradation; 2-deoxy-D-ribose 1-phosphate degradation; D-glyceraldehyde 3-phosphate and acetaldehyde from 2-deoxy-alpha-D-ribose 1-phosphate: step 2/2. Catalyzes a reversible aldol reaction between acetaldehyde and D-glyceraldehyde 3-phosphate to generate 2-deoxy-D-ribose 5-phosphate. This Shewanella baltica (strain OS223) protein is Deoxyribose-phosphate aldolase.